Here is a 511-residue protein sequence, read N- to C-terminus: Dopamine receptor 1 (511 aa).

The first 19 residues, 1-19 (MYTPHPFGFLIILVPMTNA), serve as a signal peptide directing secretion. The Extracellular segment spans residues 20 to 142 (MRAIAAIAAG…EEPEPLSLVS (123 aa)). 5 N-linked (GlcNAc...) asparagine glycosylation sites follow: N53, N63, N74, N117, and N123. A helical transmembrane segment spans residues 143 to 169 (IVVVGIFLSVLIFLSVAGNILVCLAIY). Residues 170–179 (TERSLRRIGN) are Cytoplasmic-facing. The helical transmembrane segment at 180 to 206 (LFLASLAIADLFVASLVMTFAGVNDLL) threads the bilayer. Over 207-216 (GYWIFGAQFC) the chain is Extracellular. The cysteines at positions 216 and 302 are disulfide-linked. Residues 217 to 239 (DTWVAFDVMCSTASILNLCAISM) form a helical membrane-spanning segment. The Cytoplasmic segment spans residues 240–258 (DRYIHIKDPLRYGRWVTRR). The chain crosses the membrane as a helical span at residues 259 to 279 (VAVITIAAIWLLAAFVSFVPI). Topologically, residues 280-310 (SLGIHRPDQPLIFEDNGKKYPTCALDLTPTY) are extracellular. The chain crosses the membrane as a helical span at residues 311 to 331 (AVVSSCISFYFPCVVMIGIYC). Topologically, residues 332 to 391 (RLYCYAQKHVKSIKAVTRPGEVAEKQRYKSIRRPKNQPKKFKVRNLHTHSSPYHVSDHKA) are cytoplasmic. A helical membrane pass occupies residues 392–412 (AVTVGVIMGVFLICWVPFFCV). The Extracellular segment spans residues 413-427 (NITAAFCKTCIGGQT). Residues 428–450 (FKILTWLGYSNSAFNPIIYSIFN) form a helical membrane-spanning segment. Residues 451–511 (KEFRDAFKRI…SAELEQVSAI (61 aa)) are Cytoplasmic-facing. 2 S-palmitoyl cysteine lipidation sites follow: C468 and C469.

It belongs to the G-protein coupled receptor 1 family. As to expression, expressed in the larval and adult CNS in structures that mediate higher-order brain functions such as learning, memory and motor control: in the mushroom body neuropil and four unpaired neurons in each thoracic segment. The adult CNS has intense expression in the central complex, moderate expression in several neurosecretory cells, and weak expression in two unpaired neurons in the mesothoracic neuromere. Also seen in the somata of the optic lobes.

It is found in the cell membrane. Functionally, receptor for dopamine. The activity of this receptor is mediated by G proteins which activate adenylyl cyclase. Might be involved in the processing of visual information and/or visual learning. Important for Pavlovian conditioning: required in the mushroom body as a receptor conveying unconditional stimuli information, has a role in memory formation for aversive and appetitive learning. Sleep-deprivation-induced impairments in learning can be partially explained through alterations in dopamine signaling, Dop1R1 expression levels are reduced; sleep may have a role in restoring dopamine homeostasis. In Drosophila melanogaster (Fruit fly), this protein is Dopamine receptor 1 (Dop1R1).